The sequence spans 350 residues: Eukaryotic translation initiation factor 3 subunit I (350 aa).

6 WD repeats span residues 8–49, 51–89, 91–135, 149–188, 198–240, and 296–335; these read GHER…GTLE, HQGV…CVFT, ESPS…ESLT, QDGA…AVNS, EKNV…KVYK, and GHFG…FDFY.

This sequence belongs to the eIF-3 subunit I family. As to quaternary structure, component of the eukaryotic translation initiation factor 3 (eIF-3) complex.

The protein localises to the cytoplasm. Functionally, component of the eukaryotic translation initiation factor 3 (eIF-3) complex, which is involved in protein synthesis of a specialized repertoire of mRNAs and, together with other initiation factors, stimulates binding of mRNA and methionyl-tRNAi to the 40S ribosome. The eIF-3 complex specifically targets and initiates translation of a subset of mRNAs involved in cell proliferation. The protein is Eukaryotic translation initiation factor 3 subunit I of Scheffersomyces stipitis (strain ATCC 58785 / CBS 6054 / NBRC 10063 / NRRL Y-11545) (Yeast).